Reading from the N-terminus, the 381-residue chain is Chaperone protein DnaJ (381 aa).

Positions 5-70 (DFYEVLGVGR…QKKAAYDQYG (66 aa)) constitute a J domain. A CR-type zinc finger spans residues 136–214 (GVSKEIEVPT…CHGQGRKQKT (79 aa)). 8 residues coordinate Zn(2+): C149, C152, C166, C169, C188, C191, C202, and C205. 4 CXXCXGXG motif repeats span residues 149–156 (CDTCDGSG), 166–173 (CGTCHGHG), 188–195 (CPTCHGKG), and 202–209 (CNECHGQG).

It belongs to the DnaJ family. Homodimer. Requires Zn(2+) as cofactor.

It is found in the cytoplasm. Its function is as follows. Participates actively in the response to hyperosmotic and heat shock by preventing the aggregation of stress-denatured proteins and by disaggregating proteins, also in an autonomous, DnaK-independent fashion. Unfolded proteins bind initially to DnaJ; upon interaction with the DnaJ-bound protein, DnaK hydrolyzes its bound ATP, resulting in the formation of a stable complex. GrpE releases ADP from DnaK; ATP binding to DnaK triggers the release of the substrate protein, thus completing the reaction cycle. Several rounds of ATP-dependent interactions between DnaJ, DnaK and GrpE are required for fully efficient folding. Also involved, together with DnaK and GrpE, in the DNA replication of plasmids through activation of initiation proteins. The sequence is that of Chaperone protein DnaJ from Vibrio campbellii (strain ATCC BAA-1116).